A 200-amino-acid chain; its full sequence is Holliday junction branch migration complex subunit RuvA (200 aa).

The interval methionine 1–leucine 63 is domain I. The tract at residues threonine 64 to lysine 142 is domain II. A flexible linker region spans residues lysine 142 to asparagine 146. The domain III stretch occupies residues isoleucine 147 to phenylalanine 200.

Belongs to the RuvA family. In terms of assembly, homotetramer. Forms an RuvA(8)-RuvB(12)-Holliday junction (HJ) complex. HJ DNA is sandwiched between 2 RuvA tetramers; dsDNA enters through RuvA and exits via RuvB. An RuvB hexamer assembles on each DNA strand where it exits the tetramer. Each RuvB hexamer is contacted by two RuvA subunits (via domain III) on 2 adjacent RuvB subunits; this complex drives branch migration. In the full resolvosome a probable DNA-RuvA(4)-RuvB(12)-RuvC(2) complex forms which resolves the HJ.

It localises to the cytoplasm. In terms of biological role, the RuvA-RuvB-RuvC complex processes Holliday junction (HJ) DNA during genetic recombination and DNA repair, while the RuvA-RuvB complex plays an important role in the rescue of blocked DNA replication forks via replication fork reversal (RFR). RuvA specifically binds to HJ cruciform DNA, conferring on it an open structure. The RuvB hexamer acts as an ATP-dependent pump, pulling dsDNA into and through the RuvAB complex. HJ branch migration allows RuvC to scan DNA until it finds its consensus sequence, where it cleaves and resolves the cruciform DNA. The protein is Holliday junction branch migration complex subunit RuvA of Rickettsia typhi (strain ATCC VR-144 / Wilmington).